A 160-amino-acid polypeptide reads, in one-letter code: SsrA-binding protein (160 aa).

A compositionally biased stretch (basic and acidic residues) spans 137–153; that stretch reads DKRDDIKTREWKQDKAR. Positions 137–160 are disordered; the sequence is DKRDDIKTREWKQDKARIMKNANR.

Belongs to the SmpB family.

It localises to the cytoplasm. Functionally, required for rescue of stalled ribosomes mediated by trans-translation. Binds to transfer-messenger RNA (tmRNA), required for stable association of tmRNA with ribosomes. tmRNA and SmpB together mimic tRNA shape, replacing the anticodon stem-loop with SmpB. tmRNA is encoded by the ssrA gene; the 2 termini fold to resemble tRNA(Ala) and it encodes a 'tag peptide', a short internal open reading frame. During trans-translation Ala-aminoacylated tmRNA acts like a tRNA, entering the A-site of stalled ribosomes, displacing the stalled mRNA. The ribosome then switches to translate the ORF on the tmRNA; the nascent peptide is terminated with the 'tag peptide' encoded by the tmRNA and targeted for degradation. The ribosome is freed to recommence translation, which seems to be the essential function of trans-translation. The sequence is that of SsrA-binding protein from Edwardsiella ictaluri (strain 93-146).